A 201-amino-acid polypeptide reads, in one-letter code: GTP cyclohydrolase 1 (201 aa).

The Zn(2+) site is built by Cys90, His93, and Cys163.

Belongs to the GTP cyclohydrolase I family. In terms of assembly, toroid-shaped homodecamer, composed of two pentamers of five dimers.

It catalyses the reaction GTP + H2O = 7,8-dihydroneopterin 3'-triphosphate + formate + H(+). It functions in the pathway cofactor biosynthesis; 7,8-dihydroneopterin triphosphate biosynthesis; 7,8-dihydroneopterin triphosphate from GTP: step 1/1. The polypeptide is GTP cyclohydrolase 1 (Streptomyces avermitilis (strain ATCC 31267 / DSM 46492 / JCM 5070 / NBRC 14893 / NCIMB 12804 / NRRL 8165 / MA-4680)).